The following is a 152-amino-acid chain: Deoxyuridine 5'-triphosphate nucleotidohydrolase (152 aa).

Substrate-binding positions include 70-72 (RSG), asparagine 83, 87-89 (LID), and methionine 97.

This sequence belongs to the dUTPase family. It depends on Mg(2+) as a cofactor.

It carries out the reaction dUTP + H2O = dUMP + diphosphate + H(+). It functions in the pathway pyrimidine metabolism; dUMP biosynthesis; dUMP from dCTP (dUTP route): step 2/2. This enzyme is involved in nucleotide metabolism: it produces dUMP, the immediate precursor of thymidine nucleotides and it decreases the intracellular concentration of dUTP so that uracil cannot be incorporated into DNA. This is Deoxyuridine 5'-triphosphate nucleotidohydrolase from Buchnera aphidicola subsp. Baizongia pistaciae (strain Bp).